The following is a 469-amino-acid chain: Glutamate--tRNA ligase 2 (469 aa).

Residues Pro11–Gly21 carry the 'HIGH' region motif. The 'KMSKS' region signature appears at Lys238–Arg242. ATP is bound at residue Lys241.

Belongs to the class-I aminoacyl-tRNA synthetase family. Glutamate--tRNA ligase type 1 subfamily. As to quaternary structure, monomer.

Its subcellular location is the cytoplasm. The catalysed reaction is tRNA(Glu) + L-glutamate + ATP = L-glutamyl-tRNA(Glu) + AMP + diphosphate. Catalyzes the attachment of glutamate to tRNA(Glu) in a two-step reaction: glutamate is first activated by ATP to form Glu-AMP and then transferred to the acceptor end of tRNA(Glu). This is Glutamate--tRNA ligase 2 from Ehrlichia chaffeensis (strain ATCC CRL-10679 / Arkansas).